A 238-amino-acid polypeptide reads, in one-letter code: MTDQTTTRRVLLKLSGESFGGGQMGVDPDVVSALAREIAEAAKTVEVAIVVGGGNFFRGAQLSQRGMDRGRADYMGMLGTVMNALALQDFLEQAGAATRVQSAISMTQVAEPYIPRRAVRHLEKGRIVIFGAGAGLPYFSTDTVAAQRALEIQAVEVLVAKNGVDGVYTGDPRTDPSATLLDTVTYQDALQRGLKVVDSTAFSLCMDNDMKMVVFGMEPGGNVTRAIRGERIGTIVSN.

13 to 16 is an ATP binding site; the sequence is KLSG. Glycine 53 contributes to the UMP binding site. Glycine 54 and arginine 58 together coordinate ATP. UMP is bound by residues aspartate 73 and 134 to 141; that span reads AGLPYFST. Asparagine 162, tyrosine 168, and aspartate 171 together coordinate ATP.

It belongs to the UMP kinase family. In terms of assembly, homohexamer.

The protein localises to the cytoplasm. It catalyses the reaction UMP + ATP = UDP + ADP. It participates in pyrimidine metabolism; CTP biosynthesis via de novo pathway; UDP from UMP (UMPK route): step 1/1. Its activity is regulated as follows. Inhibited by UTP. Its function is as follows. Catalyzes the reversible phosphorylation of UMP to UDP. In Clavibacter michiganensis subsp. michiganensis (strain NCPPB 382), this protein is Uridylate kinase.